A 125-amino-acid chain; its full sequence is Small ribosomal subunit protein uS11 (125 aa).

It belongs to the universal ribosomal protein uS11 family. In terms of assembly, part of the 30S ribosomal subunit. Interacts with proteins S7 and S18. Binds to IF-3.

Its function is as follows. Located on the platform of the 30S subunit, it bridges several disparate RNA helices of the 16S rRNA. Forms part of the Shine-Dalgarno cleft in the 70S ribosome. This Aquifex aeolicus (strain VF5) protein is Small ribosomal subunit protein uS11.